Reading from the N-terminus, the 520-residue chain is UBX domain-containing protein 11 (520 aa).

The tract at residues 1–26 (MSSPLASLSKTRKVPLPSEPMNPGRR) is disordered. Residues 76-149 (MAFMTRKLWD…VREMERFLSD (74 aa)) are a coiled coil. The SEP domain maps to 230 to 294 (LEPIPLKLYR…VSDLRNQVYL (65 aa)). One can recognise a UBX domain in the interval 392 to 469 (PAPPLSMLRI…GLVPKAALLL (78 aa)). The segment at 476–520 (KSSLKFSPGPCPGPGPGPSPGPGPGPSPGPGPGPSPCPGPSPSPQ) is disordered. Positions 484 to 520 (GPCPGPGPGPSPGPGPGPSPGPGPGPSPCPGPSPSPQ) are enriched in pro residues. Repeat copies occupy residues 487–494 (PGPGPGPS), 495–502 (PGPGPGPS), and 503–510 (PGPGPGPS). The tract at residues 487–510 (PGPGPGPSPGPGPGPSPGPGPGPS) is 3 X 8 AA tandem repeats of P-G-P-G-P-G-P-S.

In terms of assembly, interacts with GNA12, GNA13, RND1, RND2 and RND3.

The protein localises to the cytoplasm. It is found in the cytoskeleton. May be involved in the reorganization of actin cytoskeleton mediated by RND1, RND2 and RND3. Promotes RHOA activation mediated by GNA12 and GNA13. The polypeptide is UBX domain-containing protein 11 (UBXN11) (Homo sapiens (Human)).